We begin with the raw amino-acid sequence, 497 residues long: MEKEKWWFNSMLFNRELEYRCGLSKSTDGIGPIGNTNGSEDPVIDKNIHCWGDSDSSSCNNVDRLFGVRGIRNFISDDTFLVRDSNGDNYSIYFDIENHIFEIDNDRYELESSFSSYLNSSYLNTGSKSNNHYYDRYMYDTKYSWNNHINSCIDNYLDSEIRINSYFSSGGDNYSKSYIYSYICSESVNSIANASSDIKTSANESDSHESDSHMRGKYNDLDINKKYRHLWVQCENCYGLNYKKFFRSKFNICEQCGYHLKMSSSDRIELSIDPGTWDPMDDDMVSVDPIEFHSEEEPYKDRIDSYQKKTGLTEAVQTGIGQLNGIPIAIGVMDFQFMGGSMGSVVGEKITRLIEYATNRSLPVIIVCASGGARMQEGSLSLMQMAKISSASYNYQSNKKLLYVSILTSPTTGGVTASFGMLGDIIIAEPNAYIAFAGKRVIEQTLNKIVPDGSQAAEYLFHKGLFDPIVPRNLLKGVLSELFQLHGFFPVNSNSIK.

A CoA carboxyltransferase N-terminal domain is found at 230 to 497 (LWVQCENCYG…FFPVNSNSIK (268 aa)). Zn(2+) is bound by residues cysteine 234, cysteine 237, cysteine 253, and cysteine 256. The segment at 234–256 (CENCYGLNYKKFFRSKFNICEQC) adopts a C4-type zinc-finger fold.

Belongs to the AccD/PCCB family. In terms of assembly, acetyl-CoA carboxylase is a heterohexamer composed of biotin carboxyl carrier protein, biotin carboxylase and 2 subunits each of ACCase subunit alpha and ACCase plastid-coded subunit beta (accD). Requires Zn(2+) as cofactor.

Its subcellular location is the plastid. The protein localises to the chloroplast stroma. The enzyme catalyses N(6)-carboxybiotinyl-L-lysyl-[protein] + acetyl-CoA = N(6)-biotinyl-L-lysyl-[protein] + malonyl-CoA. Its pathway is lipid metabolism; malonyl-CoA biosynthesis; malonyl-CoA from acetyl-CoA: step 1/1. Component of the acetyl coenzyme A carboxylase (ACC) complex. Biotin carboxylase (BC) catalyzes the carboxylation of biotin on its carrier protein (BCCP) and then the CO(2) group is transferred by the transcarboxylase to acetyl-CoA to form malonyl-CoA. The protein is Acetyl-coenzyme A carboxylase carboxyl transferase subunit beta, chloroplastic of Nandina domestica (Heavenly bamboo).